The sequence spans 347 residues: D-alanine--D-alanine ligase (347 aa).

In terms of domain architecture, ATP-grasp spans 138–339 (KILCSHAGIP…YSQVIETILA (202 aa)). 171–226 (SDRFTFPLFVKPVDAGSSFGCTFVDFFEQLPVAIEHALQHGKSAIVEPALDAPEVF) provides a ligand contact to ATP. D296, E308, and N310 together coordinate Mg(2+).

The protein belongs to the D-alanine--D-alanine ligase family. Mg(2+) is required as a cofactor. Requires Mn(2+) as cofactor.

The protein localises to the cytoplasm. It catalyses the reaction 2 D-alanine + ATP = D-alanyl-D-alanine + ADP + phosphate + H(+). It participates in cell wall biogenesis; peptidoglycan biosynthesis. Functionally, cell wall formation. The protein is D-alanine--D-alanine ligase of Tropheryma whipplei (strain Twist) (Whipple's bacillus).